Here is an 832-residue protein sequence, read N- to C-terminus: Cation/H(+) antiporter 21 (832 aa).

The next 12 membrane-spanning stretches (helical) occupy residues Ile-33 to Tyr-55, Leu-61 to Leu-81, Leu-99 to Leu-119, Val-132 to Leu-152, Ile-161 to Ala-181, Cys-200 to Phe-220, Ser-236 to Phe-256, Ile-278 to Phe-298, Phe-319 to Gly-339, Val-352 to Leu-372, Gly-379 to Ala-399, and His-413 to Tyr-433. Residues Arg-792–Pro-802 show a composition bias toward polar residues. The segment at Arg-792–Arg-832 is disordered.

It belongs to the monovalent cation:proton antiporter 2 (CPA2) transporter (TC 2.A.37) family. CHX (TC 2.A.37.4) subfamily. In terms of tissue distribution, specifically expressed in root endodermal cells. Expressed in seedlings, roots, leaves, flowers, flower buds and pollen.

Its subcellular location is the cell membrane. In terms of biological role, operates as a Na(+)/H(+) antiporter that plays a role in regulation of xylem Na(+) concentration and, consequently, Na(+) accumulation in the leaf. Required for pollen tube guidance, but not for normal pollen development. May also be involved in the development or function of the female gametophyte. This is Cation/H(+) antiporter 21 (CHX21) from Arabidopsis thaliana (Mouse-ear cress).